Here is a 433-residue protein sequence, read N- to C-terminus: UDP-N-acetylglucosamine 1-carboxyvinyltransferase 2 (433 aa).

Residue 23–24 participates in phosphoenolpyruvate binding; the sequence is KN. Residue R96 coordinates UDP-N-acetyl-alpha-D-glucosamine. The Proton donor role is filled by C120. The residue at position 120 (C120) is a 2-(S-cysteinyl)pyruvic acid O-phosphothioketal. UDP-N-acetyl-alpha-D-glucosamine-binding positions include 125–129, D308, and V330; that span reads RPIDL.

The protein belongs to the EPSP synthase family. MurA subfamily.

It is found in the cytoplasm. It catalyses the reaction phosphoenolpyruvate + UDP-N-acetyl-alpha-D-glucosamine = UDP-N-acetyl-3-O-(1-carboxyvinyl)-alpha-D-glucosamine + phosphate. It functions in the pathway cell wall biogenesis; peptidoglycan biosynthesis. Its function is as follows. Cell wall formation. Adds enolpyruvyl to UDP-N-acetylglucosamine. The sequence is that of UDP-N-acetylglucosamine 1-carboxyvinyltransferase 2 from Enterococcus faecalis (strain ATCC 700802 / V583).